We begin with the raw amino-acid sequence, 294 residues long: Cytidine deaminase (294 aa).

CMP/dCMP-type deaminase domains follow at residues 48-168 (DEDA…FGPK) and 186-294 (VSGD…VLLG). Position 89 to 91 (89 to 91 (NME)) interacts with substrate. Residue His-102 participates in Zn(2+) binding. The active-site Proton donor is the Glu-104. Residues Cys-129 and Cys-132 each contribute to the Zn(2+) site.

Belongs to the cytidine and deoxycytidylate deaminase family. Homodimer. The cofactor is Zn(2+).

The catalysed reaction is cytidine + H2O + H(+) = uridine + NH4(+). It catalyses the reaction 2'-deoxycytidine + H2O + H(+) = 2'-deoxyuridine + NH4(+). Functionally, this enzyme scavenges exogenous and endogenous cytidine and 2'-deoxycytidine for UMP synthesis. This is Cytidine deaminase from Klebsiella pneumoniae (strain 342).